We begin with the raw amino-acid sequence, 692 residues long: MAREFSLENTRNIGIMAHIDAGKTTTTERILFYTGRVHKIGETHEGSATMDWMEQEQERGITITSAATTAQWKGHRINIIDTPGHVDFTVEVERSLRVLDGAITVLDAQSGVEPQTETVWRQATTYGVPRIVFVNKMDKIGADFLYAVKTLHDRLQANAYPVQLPIGAEDQFTGIIDLVEMCAYHYHDDLGKNIERIEIPEDYRDLAEEYHGKLIEAVAELDEELMMKYLEGEEITKEELKAAIRKATINVEFYPVFCGSAFKNKGVQLLLDGVVDYLPSPLDIPAIRGIIPDTEEEVAREARDDAPFSALAFKIMTDPYVGKLTFFRVYSGTLDSGSYVMNSTKRKRERIGRLLQMHANHRQEISTVYAGDIAAAVGLKETTTGDTLCDEKNLVILESMQFPEPVISVAIEPKSKADQDKMGQALQKLQEEDPTFRAHTDPETGQTIISGMGELHLDIIVDRMRREFKVEANVGAPQVAYRETFRQSAQVEGKFIRQSGGRGQYGHVWIEFTPNERGKGFEFENAIVGGVVPKEYVPAVQAGLEEAMQNGVLAGYPVVDIKAKLFDGSYHDVDSSEMAFKIAASMALKNAAAKCEPVLLEPIMKVEVVIPEEYLGDIMGDITSRRGRVEGMEARGNAQVVRAMVPMAEMFGYATSLRSNTQGRGTFSMVFDHYEEVPKNIADEIIKKNKGE.

The region spanning 8-282 (ENTRNIGIMA…GVVDYLPSPL (275 aa)) is the tr-type G domain. GTP contacts are provided by residues 17-24 (AHIDAGKT), 81-85 (DTPGH), and 135-138 (NKMD).

This sequence belongs to the TRAFAC class translation factor GTPase superfamily. Classic translation factor GTPase family. EF-G/EF-2 subfamily.

It is found in the cytoplasm. Its function is as follows. Catalyzes the GTP-dependent ribosomal translocation step during translation elongation. During this step, the ribosome changes from the pre-translocational (PRE) to the post-translocational (POST) state as the newly formed A-site-bound peptidyl-tRNA and P-site-bound deacylated tRNA move to the P and E sites, respectively. Catalyzes the coordinated movement of the two tRNA molecules, the mRNA and conformational changes in the ribosome. This chain is Elongation factor G, found in Geobacillus thermodenitrificans (strain NG80-2).